The chain runs to 361 residues: Probable mannitol dehydrogenase (361 aa).

Zn(2+) contacts are provided by cysteine 51, histidine 73, cysteine 104, cysteine 107, cysteine 110, cysteine 118, and cysteine 167.

It belongs to the zinc-containing alcohol dehydrogenase family. The cofactor is Zn(2+).

The enzyme catalyses D-mannitol + NAD(+) = D-mannose + NADH + H(+). Its function is as follows. Oxidizes mannitol to mannose. Provides the initial step by which translocated mannitol is committed to central metabolism and, by regulating mannitol pool size, is important in regulating salt tolerance at the cellular level. The sequence is that of Probable mannitol dehydrogenase (ELI3) from Mesembryanthemum crystallinum (Common ice plant).